We begin with the raw amino-acid sequence, 452 residues long: UDP-glycosyltransferase 79B11 (452 aa).

Residues S260, 319–325 (VQQPSWQ), 340–348 (HCGFGSMWE), and 362–365 (LNDQ) contribute to the UDP-alpha-D-glucose site.

Belongs to the UDP-glycosyltransferase family.

The polypeptide is UDP-glycosyltransferase 79B11 (UGT79B11) (Arabidopsis thaliana (Mouse-ear cress)).